The primary structure comprises 355 residues: Peptide chain release factor 1 (355 aa).

Gln231 carries the post-translational modification N5-methylglutamine. Residues 283–292 are compositionally biased toward basic and acidic residues; it reads LAKETSERKS. A disordered region spans residues 283-306; the sequence is LAKETSERKSQVGTGDRSGRIRTY.

Belongs to the prokaryotic/mitochondrial release factor family. Methylated by PrmC. Methylation increases the termination efficiency of RF1.

The protein resides in the cytoplasm. In terms of biological role, peptide chain release factor 1 directs the termination of translation in response to the peptide chain termination codons UAG and UAA. The sequence is that of Peptide chain release factor 1 from Campylobacter concisus (strain 13826).